Reading from the N-terminus, the 520-residue chain is Sodium-dependent dicarboxylate transporter SdcS (520 aa).

14 helical membrane-spanning segments follow: residues 30–50, 55–75, 77–97, 104–124, 160–180, 207–227, 242–262, 298–318, 323–343, 362–382, 399–419, 428–448, 452–472, and 491–511; these read AGQL…LLFF, LPWK…WWIT, AIPI…GHIL, SEYG…AIAM, SMFV…LAII, IGYA…PLII, FAKW…ITWL, KVVQ…EFLL, VTSS…LFII, ELPW…KGIS, GVSP…LTEV, MILP…LLLM, AMAA…AIIF, and LISA…VLGI.

This sequence belongs to the SLC13A/DASS transporter (TC 2.A.47) family. NADC subfamily.

It localises to the cell membrane. Mediates the transport of the dicarboxylates fumarate, malate, and succinate across the cytoplasmic membrane via a Na(+)-electrochemical gradient. The protein is Sodium-dependent dicarboxylate transporter SdcS (sdcS) of Staphylococcus aureus (strain NCTC 8325 / PS 47).